The chain runs to 299 residues: uncharacterized protein (299 aa).

The interval 1–44 (MSDSNLTNPIKAFFHDEFPEQYQEPPGLQKNMKPVPDCGEKSYK) is disordered. 55-79 (LVTGGDSGIGRAAAIAYAREGADVA) serves as a coordination point for NADP(+). Substrate is bound at residue S188. Y201 (proton acceptor) is an active-site residue.

Belongs to the short-chain dehydrogenases/reductases (SDR) family.

This is an uncharacterized protein from Bacillus subtilis (strain 168).